Consider the following 462-residue polypeptide: Asparagine--tRNA ligase (462 aa).

The protein belongs to the class-II aminoacyl-tRNA synthetase family. As to quaternary structure, homodimer.

Its subcellular location is the cytoplasm. The catalysed reaction is tRNA(Asn) + L-asparagine + ATP = L-asparaginyl-tRNA(Asn) + AMP + diphosphate + H(+). In Synechocystis sp. (strain ATCC 27184 / PCC 6803 / Kazusa), this protein is Asparagine--tRNA ligase.